The sequence spans 57 residues: MKPAVDEMFPEGAGPYVDLDEAGGSSGLLMDLAADEKAVHADFFNDFEDLFDDEDIQ.

It belongs to the CSN9 family. In terms of assembly, component of the CSN complex, probably composed of cops1, cops2, cops3, cops4, cops5, cops6, cops7, cops8 and cops9.

It is found in the nucleus. It localises to the cytoplasm. The protein localises to the nucleoplasm. Component of the COP9 signalosome complex (CSN), a complex involved in various cellular and developmental processes. The CSN complex is an essential regulator of the ubiquitin (Ubl) conjugation pathway by mediating the deneddylation of the cullin subunits of SCF-type E3 ligase complexes, leading to decrease the Ubl ligase activity. May play a role in cell proliferation. The polypeptide is COP9 signalosome complex subunit 9 (Xenopus laevis (African clawed frog)).